The following is a 117-amino-acid chain: UPF0102 protein Clos_1471 (117 aa).

Belongs to the UPF0102 family.

This is UPF0102 protein Clos_1471 from Alkaliphilus oremlandii (strain OhILAs) (Clostridium oremlandii (strain OhILAs)).